The sequence spans 136 residues: Large ribosomal subunit protein uL16 (136 aa).

The protein belongs to the universal ribosomal protein uL16 family. Part of the 50S ribosomal subunit.

In terms of biological role, binds 23S rRNA and is also seen to make contacts with the A and possibly P site tRNAs. The protein is Large ribosomal subunit protein uL16 of Pectobacterium atrosepticum (strain SCRI 1043 / ATCC BAA-672) (Erwinia carotovora subsp. atroseptica).